A 154-amino-acid chain; its full sequence is Putative pre-16S rRNA nuclease (154 aa).

Belongs to the YqgF nuclease family.

The protein resides in the cytoplasm. Functionally, could be a nuclease involved in processing of the 5'-end of pre-16S rRNA. This chain is Putative pre-16S rRNA nuclease, found in Rickettsia felis (strain ATCC VR-1525 / URRWXCal2) (Rickettsia azadi).